Consider the following 279-residue polypeptide: Diaminopimelate epimerase (279 aa).

The substrate site is built by N13, Q46, and N66. C75 (proton donor) is an active-site residue. Substrate contacts are provided by residues 76-77, N161, N194, and 212-213; these read GN and ER. The active-site Proton acceptor is the C221. Substrate is bound at residue 222 to 223; sequence GT.

It belongs to the diaminopimelate epimerase family. As to quaternary structure, homodimer.

Its subcellular location is the cytoplasm. It catalyses the reaction (2S,6S)-2,6-diaminopimelate = meso-2,6-diaminopimelate. The protein operates within amino-acid biosynthesis; L-lysine biosynthesis via DAP pathway; DL-2,6-diaminopimelate from LL-2,6-diaminopimelate: step 1/1. Functionally, catalyzes the stereoinversion of LL-2,6-diaminopimelate (L,L-DAP) to meso-diaminopimelate (meso-DAP), a precursor of L-lysine and an essential component of the bacterial peptidoglycan. In Alkalilimnicola ehrlichii (strain ATCC BAA-1101 / DSM 17681 / MLHE-1), this protein is Diaminopimelate epimerase.